A 207-amino-acid chain; its full sequence is dITP/XTP pyrophosphatase (207 aa).

16–21 serves as a coordination point for substrate; that stretch reads SNNKGK. Asp79 acts as the Proton acceptor in catalysis. Residue Asp79 coordinates Mg(2+). Substrate-binding positions include Ser80, 166–169, Lys189, and 194–195; these read FGYD and HR.

The protein belongs to the HAM1 NTPase family. As to quaternary structure, homodimer. It depends on Mg(2+) as a cofactor.

The catalysed reaction is XTP + H2O = XMP + diphosphate + H(+). It catalyses the reaction dITP + H2O = dIMP + diphosphate + H(+). The enzyme catalyses ITP + H2O = IMP + diphosphate + H(+). Pyrophosphatase that catalyzes the hydrolysis of nucleoside triphosphates to their monophosphate derivatives, with a high preference for the non-canonical purine nucleotides XTP (xanthosine triphosphate), dITP (deoxyinosine triphosphate) and ITP. Seems to function as a house-cleaning enzyme that removes non-canonical purine nucleotides from the nucleotide pool, thus preventing their incorporation into DNA/RNA and avoiding chromosomal lesions. This is dITP/XTP pyrophosphatase from Acinetobacter baumannii (strain ATCC 17978 / DSM 105126 / CIP 53.77 / LMG 1025 / NCDC KC755 / 5377).